Consider the following 206-residue polypeptide: Small ribosomal subunit protein uS4 (206 aa).

Positions 96–156 (TRLDNVVYRM…EKSQKQARIK (61 aa)) constitute an S4 RNA-binding domain.

The protein belongs to the universal ribosomal protein uS4 family. In terms of assembly, part of the 30S ribosomal subunit. Contacts protein S5. The interaction surface between S4 and S5 is involved in control of translational fidelity.

One of the primary rRNA binding proteins, it binds directly to 16S rRNA where it nucleates assembly of the body of the 30S subunit. Functionally, with S5 and S12 plays an important role in translational accuracy. This chain is Small ribosomal subunit protein uS4, found in Shewanella loihica (strain ATCC BAA-1088 / PV-4).